The following is a 1081-amino-acid chain: Zinc finger protein 827 (1081 aa).

The segment covering 1-10 has biased composition (basic and acidic residues); it reads MPRRKQEQPK. The segment at 1-14 is mediates direct interaction with RBBP4; it reads MPRRKQEQPKRLPS. Residues 1–77 are disordered; it reads MPRRKQEQPK…DTSLGSTTPS (77 aa). The RRK motif; mediates NuRD recruitment to telomeres signature appears at 3–5; sequence RRK. Positions 62 to 77 are enriched in polar residues; that stretch reads EQSTSPDTSLGSTTPS. Glycyl lysine isopeptide (Lys-Gly) (interchain with G-Cter in SUMO2) cross-links involve residues Lys176, Lys216, and Lys226. 2 disordered regions span residues 259-278 and 307-348; these read KVSE…ASSF and SSLL…SLEL. Positions 327 to 344 are enriched in pro residues; it reads VTPPPPPPPPPPPPPPPQ. Residues Lys360 and Lys372 each participate in a glycyl lysine isopeptide (Lys-Gly) (interchain with G-Cter in SUMO2) cross-link. 3 consecutive C2H2-type zinc fingers follow at residues 374–396, 402–424, and 433–455; these read FQCP…MVIH, HQCP…MKVH, and FQCQ…MRCH. Residues Lys466, Lys475, Lys523, Lys549, Lys580, Lys587, Lys597, Lys634, Lys639, and Lys658 each participate in a glycyl lysine isopeptide (Lys-Gly) (interchain with G-Cter in SUMO2) cross-link. A Glycyl lysine isopeptide (Lys-Gly) (interchain with G-Cter in SUMO1); alternate cross-link involves residue Lys673. Lys673 participates in a covalent cross-link: Glycyl lysine isopeptide (Lys-Gly) (interchain with G-Cter in SUMO2); alternate. Glycyl lysine isopeptide (Lys-Gly) (interchain with G-Cter in SUMO2) cross-links involve residues Lys704, Lys710, Lys742, Lys778, and Lys798. 2 C2H2-type zinc fingers span residues 817 to 839 and 845 to 867; these read FPCD…LSLH and YKCH…LTVH. Glycyl lysine isopeptide (Lys-Gly) (interchain with G-Cter in SUMO2) cross-links involve residues Lys870 and Lys891. 2 consecutive C2H2-type zinc fingers follow at residues 897–919 and 929–952; these read YSCH…MSLH and ICCT…GTKH. A compositionally biased stretch (basic and acidic residues) spans 947–960; the sequence is HIGTKHTGEDRKTP. Positions 947-996 are disordered; it reads HIGTKHTGEDRKTPSESNSPSSSSLSALSDSANSKDDSDGSQKNKGGNNL. Lys958 is covalently cross-linked (Glycyl lysine isopeptide (Lys-Gly) (interchain with G-Cter in SUMO2)). A compositionally biased stretch (low complexity) spans 961 to 978; that stretch reads SESNSPSSSSLSALSDSA. The segment covering 979–988 has biased composition (basic and acidic residues); the sequence is NSKDDSDGSQ. A Glycyl lysine isopeptide (Lys-Gly) (interchain with G-Cter in SUMO2) cross-link involves residue Lys1014. 2 C2H2-type zinc fingers span residues 1019–1041 and 1047–1069; these read FECV…LQIH and FECD…KKCH.

It belongs to the krueppel C2H2-type zinc-finger protein family. As to quaternary structure, part of a transcription inhibitory ribonucleoprotein complex composed at least of the circular RNA circZNF827, HNRNPK and HNRNPL. Interacts with the nucleosome remodeling and histone deacetylase/NuRD complex. Interacts with RBBP4; the interaction is direct and recruits RBBP4, a component of the NuRD complex, to telomeres.

It localises to the nucleus. The protein localises to the chromosome. Its subcellular location is the telomere. As part of a ribonucleoprotein complex composed at least of HNRNPK, HNRNPL and the circular RNA circZNF827 that nucleates the complex on chromatin, may negatively regulate the transcription of genes involved in neuronal differentiation. Could also recruit the nucleosome remodeling and histone deacetylase/NuRD complex to telomeric regions of chromosomes to regulate chromatin remodeling as part of telomere maintenance. The sequence is that of Zinc finger protein 827 (ZNF827) from Homo sapiens (Human).